The following is a 563-amino-acid chain: Alpha-keto-acid decarboxylase (563 aa).

A thiamine diphosphate-binding site is contributed by E59. Residues 347-367 form a disordered region; sequence SSPPVASPPAEPLPPPPPREQ. Residues 351–366 show a composition bias toward pro residues; it reads VASPPAEPLPPPPPRE. Residues 394–476 form a thiamine pyrophosphate binding region; that stretch reads TSFYGMADHR…VVVNNDGYTV (83 aa). 3 residues coordinate Mg(2+): D444, N471, and G473.

Belongs to the TPP enzyme family. A metal cation serves as cofactor. The cofactor is thiamine diphosphate.

In terms of biological role, decarboxylates branched-chain and aromatic alpha-keto acids to aldehydes. This is Alpha-keto-acid decarboxylase (kdc) from Mycolicibacterium paratuberculosis (strain ATCC BAA-968 / K-10) (Mycobacterium paratuberculosis).